Here is a 155-residue protein sequence, read N- to C-terminus: Endoribonuclease YbeY (155 aa).

Zn(2+)-binding residues include histidine 116, histidine 120, and histidine 126.

It belongs to the endoribonuclease YbeY family. The cofactor is Zn(2+).

It is found in the cytoplasm. In terms of biological role, single strand-specific metallo-endoribonuclease involved in late-stage 70S ribosome quality control and in maturation of the 3' terminus of the 16S rRNA. This Thermobifida fusca (strain YX) protein is Endoribonuclease YbeY.